The sequence spans 556 residues: Formate--tetrahydrofolate ligase (556 aa).

Residue 65-72 participates in ATP binding; sequence TPAGEGKS.

Belongs to the formate--tetrahydrofolate ligase family.

It carries out the reaction (6S)-5,6,7,8-tetrahydrofolate + formate + ATP = (6R)-10-formyltetrahydrofolate + ADP + phosphate. It functions in the pathway one-carbon metabolism; tetrahydrofolate interconversion. This is Formate--tetrahydrofolate ligase from Clostridium perfringens (strain ATCC 13124 / DSM 756 / JCM 1290 / NCIMB 6125 / NCTC 8237 / Type A).